Consider the following 439-residue polypeptide: Leukocyte immunoglobulin-like receptor subfamily A member 3 (439 aa).

Residues 1–23 (MTPILTVLICLGLSLDPRTHVQA) form the signal peptide. 4 Ig-like C2-type domains span residues 27 to 108 (PKPT…AGLS), 119 to 224 (TGAY…GVSK), 226 to 315 (PSLS…DPLD), and 326 to 415 (PFLS…SDPL). A disulfide bond links C49 and C98. Residue N140 is glycosylated (N-linked (GlcNAc...) asparagine). 3 disulfides stabilise this stretch: C145–C197, C157–C167, and C246–C297. N-linked (GlcNAc...) asparagine glycans are attached at residues N281, N302, and N341. C346 and C397 are disulfide-bonded. N-linked (GlcNAc...) asparagine glycosylation occurs at N431.

N-glycosylation is required for ligand binding. In terms of tissue distribution, detected in B-cells, and at lower levels in natural killer (NK) cells. Detected in peripheral blood monocytes and lung.

It is found in the secreted. Acts as a soluble receptor for class I MHC antigens. Binds both classical and non-classical HLA class I molecules but with reduced affinities compared to LILRB1 or LILRB2. Binds with high affinity to the surface of monocytes, leading to abolish LPS-induced TNF-alpha production by monocytes. The protein is Leukocyte immunoglobulin-like receptor subfamily A member 3 (LILRA3) of Homo sapiens (Human).